Consider the following 289-residue polypeptide: ATP synthase gamma chain (289 aa).

It belongs to the ATPase gamma chain family. F-type ATPases have 2 components, CF(1) - the catalytic core - and CF(0) - the membrane proton channel. CF(1) has five subunits: alpha(3), beta(3), gamma(1), delta(1), epsilon(1). CF(0) has three main subunits: a, b and c.

The protein resides in the cell inner membrane. Functionally, produces ATP from ADP in the presence of a proton gradient across the membrane. The gamma chain is believed to be important in regulating ATPase activity and the flow of protons through the CF(0) complex. The sequence is that of ATP synthase gamma chain from Actinobacillus succinogenes (strain ATCC 55618 / DSM 22257 / CCUG 43843 / 130Z).